Reading from the N-terminus, the 339-residue chain is Ferredoxin--NADP reductase (339 aa).

Positions 36, 44, 49, 89, 123, 290, and 331 each coordinate FAD.

The protein belongs to the ferredoxin--NADP reductase type 2 family. In terms of assembly, homodimer. It depends on FAD as a cofactor.

It catalyses the reaction 2 reduced [2Fe-2S]-[ferredoxin] + NADP(+) + H(+) = 2 oxidized [2Fe-2S]-[ferredoxin] + NADPH. In Acidiphilium cryptum (strain JF-5), this protein is Ferredoxin--NADP reductase.